A 425-amino-acid chain; its full sequence is Calreticulin-1 (425 aa).

The first 22 residues, 1-22 (MAKLNPKFISLILFALVVIVSA), serve as a signal peptide directing secretion. N59 is a glycosylation site (N-linked (GlcNAc...) asparagine). An intrachain disulfide couples C108 to C140. An alpha-D-glucoside contacts are provided by Y112, K114, Y131, and D138. N-linked (GlcNAc...) asparagine glycosylation occurs at N154. Repeat copies occupy residues 194–205 (KQTGSLYSDWDL), 213–224 (DPSAKKPEDWDD), 230–241 (DPEDTKPAGYDD), 248–259 (DTDAKKPEDWDD), 263–273 (GEWTAPTIPNP), 277–287 (GEWKPKKIKNP), and 291–301 (GKWKAPMIDNP). Residues 194-259 (KQTGSLYSDW…DAKKPEDWDD (66 aa)) form a 4 X approximate repeats region. 2 stretches are compositionally biased toward basic and acidic residues: residues 213–235 (DPSA…EDTK) and 241–255 (DIPK…KKPE). The tract at residues 213-281 (DPSAKKPEDW…NPEYNGEWKP (69 aa)) is disordered. The segment at 263-301 (GEWTAPTIPNPEYNGEWKPKKIKNPAYKGKWKAPMIDNP) is 3 X approximate repeats. Residue E321 coordinates an alpha-D-glucoside. A compositionally biased stretch (basic and acidic residues) spans 348 to 378 (EETWGKHKDAEKAAFDEAEKKREEEESKDAP). The disordered stretch occupies residues 348-425 (EETWGKHKDA…EETDAAHDEL (78 aa)). Residues 379 to 398 (AESDAEEEAEDDDNEGDDSD) show a composition bias toward acidic residues. Residues S381 and S397 each carry the phosphoserine modification. N399 carries N-linked (GlcNAc...) asparagine glycosylation. Residues 399-412 (NESKSEETKEAEET) are compositionally biased toward basic and acidic residues. Positions 422-425 (HDEL) match the Prevents secretion from ER motif.

It belongs to the calreticulin family.

Its subcellular location is the endoplasmic reticulum lumen. Its function is as follows. Molecular calcium-binding chaperone promoting folding, oligomeric assembly and quality control in the ER via the calreticulin/calnexin cycle. This lectin may interact transiently with almost all of the monoglucosylated glycoproteins that are synthesized in the ER. This is Calreticulin-1 (CRT1) from Arabidopsis thaliana (Mouse-ear cress).